Reading from the N-terminus, the 940-residue chain is MHFHGIATQAVLASNITTGSGRHVSLSDVKWTLSSSALNSTVPASLPSQAHLDLLNAGVIDDPYYGLNEIDLQWIAQANWTYTSDPIPDLLEEYESTWLVFEGLDTFATVTFCGHNIASTNNQFRQYAFDVSSALKECTGGPVVRIDFASAPNTVDAIAADPKTPVWPVQLTAQLPNRWLMRKQQSDFGWDWGPAFAPCGPWKPAYVVQLEKTAPIHVLNTDLDIYRQGNINHLPPDQKQPWVVNASIDFIGRLPAEPRLLIEIKELETGDVLASQISDSVTLIGTSITGVTTLKDASPKLWWPSSLGAQNLYNVTITVFNKTEEVARITKRTGFRTIFLNQRNITATQLSQGIAPGANWHFEVNGKEFYAKGSNFIPPDTFWPRVTKQKMTRLLDAVVAGNQNMLRIWSSGAYLPDFIYDLADERGILLWSEFQFSDSMYPVDEDFLDNVAQEVVYNVRRVNHHPSLALWAGGNEIESLMLPLTREADPDNYPKYLAEYEKLYISLILPLVYENTRSISYSPSSTTEGYLSVNLSAPVPMTERYENDEPGAYYGDTDYYNYDTTVSFDYSIYPVGRFANEFGFHSMPSLQTWQQVADPEDLYFNSTTVVIHNRHYTSEGYGRIENSSRGMAEMTLGVERYYPIPDNPDSVANFSAWCLATQLFQADFYKSQIQFYRRGSGMPERQLGSLYWQLEDIWQGPTWAGIEYDGRWKVLHYVARDVYQPIIVSPFWNYTTGDLEIYVTADLWESAAGTVNLKWLNLSGEQIIDNAGTPTEIPFTVGAINTTKVYSTNIHDLNLPDTRASILTLSLSSQANLPNAAVKTSLTHENHFTPSFPKDLELVNPGLELSYDAHSGIFTVEAKSGVSLYTWLDYPAGLVGYFTENAFLLVPGQKKKVQFVVQDGPKDQDWEWQSEVTVRSLWDQKSSTFLYALRVATGRP.

Positions 1-21 (MHFHGIATQAVLASNITTGSG) are cleaved as a signal peptide. 7 N-linked (GlcNAc...) asparagine glycosylation sites follow: Asn15, Asn39, Asn79, Asn245, Asn314, Asn321, and Asn344. Glu476 serves as the catalytic Proton donor. Residues Asn534, Asn605, Asn626, Asn653, Asn733, Asn761, and Asn785 are each glycosylated (N-linked (GlcNAc...) asparagine).

It belongs to the glycosyl hydrolase 2 family. Beta-mannosidase A subfamily. In terms of assembly, homodimer.

It is found in the secreted. The enzyme catalyses Hydrolysis of terminal, non-reducing beta-D-mannose residues in beta-D-mannosides.. It functions in the pathway glycan metabolism; N-glycan degradation. In terms of biological role, exoglycosidase that cleaves the single beta-linked mannose residue from the non-reducing end of beta-mannosidic oligosaccharides of various complexity and length. Involved in the degradation of polymeric mannan and galactomannan. This is Beta-mannosidase A (mndA) from Emericella nidulans (strain FGSC A4 / ATCC 38163 / CBS 112.46 / NRRL 194 / M139) (Aspergillus nidulans).